The primary structure comprises 571 residues: Streptolysin O (571 aa).

The signal sequence occupies residues 1-33; sequence MSNKKTFKKYSRVAGLLTVALIIGNLVTANAES. Disordered regions lie at residues 32–56 and 81–108; these read ESNK…ESSE and KEMP…HTEE. A compositionally biased stretch (low complexity) spans 37-48; that stretch reads NTASTETTTTNE. The next 4 beta stranded transmembrane spans lie at 260–273, 280–289, 358–367, and 375–387; these read KSQI…NSKI, IDFKSISKGE, SNDVEAAFSA, and KTNG…LENS. The Conserved undecapeptide motif lies at 529-539; sequence ECTGLAWEWWR. Position 561 (Thr561) is a short sequence motif, cholesterol binding.

The protein belongs to the cholesterol-dependent cytolysin family. Homooligomeric pore complex of 35 to 50 subunits; when inserted in the host membrane.

Its subcellular location is the secreted. It localises to the host cell membrane. In terms of biological role, a cholesterol-dependent toxin that causes cytolysis by forming pores in cholesterol containing host membranes. After binding to target membranes, the protein undergoes a major conformation change, leading to its insertion in the host membrane and formation of an oligomeric pore complex. Cholesterol is required for binding to host membranes, membrane insertion and pore formation; cholesterol binding is mediated by a Thr-Leu pair in the C-terminus. Can be reversibly inactivated by oxidation. This Streptococcus pyogenes serotype M6 (strain ATCC BAA-946 / MGAS10394) protein is Streptolysin O (slo).